A 444-amino-acid chain; its full sequence is UDP-N-acetylglucosamine 1-carboxyvinyltransferase (444 aa).

22-23 (KN) serves as a coordination point for phosphoenolpyruvate. Arg94 contacts UDP-N-acetyl-alpha-D-glucosamine. Asp119 functions as the Proton donor in the catalytic mechanism. UDP-N-acetyl-alpha-D-glucosamine-binding residues include Asp309 and Val331.

It belongs to the EPSP synthase family. MurA subfamily.

The protein resides in the cytoplasm. The enzyme catalyses phosphoenolpyruvate + UDP-N-acetyl-alpha-D-glucosamine = UDP-N-acetyl-3-O-(1-carboxyvinyl)-alpha-D-glucosamine + phosphate. Its pathway is cell wall biogenesis; peptidoglycan biosynthesis. Functionally, cell wall formation. Adds enolpyruvyl to UDP-N-acetylglucosamine. The protein is UDP-N-acetylglucosamine 1-carboxyvinyltransferase of Chlamydia abortus (strain DSM 27085 / S26/3) (Chlamydophila abortus).